Consider the following 312-residue polypeptide: DNA-directed RNA polymerase subunit alpha (312 aa).

The interval 1–226 is alpha N-terminal domain (alpha-NTD); that stretch reads MIEFEKPKIT…DHLNLFVDLS (226 aa). The tract at residues 243 to 312 is alpha C-terminal domain (alpha-CTD); the sequence is TERVLDKIIE…ELGLSLKKRK (70 aa).

The protein belongs to the RNA polymerase alpha chain family. Homodimer. The RNAP catalytic core consists of 2 alpha, 1 beta, 1 beta' and 1 omega subunit. When a sigma factor is associated with the core the holoenzyme is formed, which can initiate transcription.

The enzyme catalyses RNA(n) + a ribonucleoside 5'-triphosphate = RNA(n+1) + diphosphate. In terms of biological role, DNA-dependent RNA polymerase catalyzes the transcription of DNA into RNA using the four ribonucleoside triphosphates as substrates. This is DNA-directed RNA polymerase subunit alpha from Lactococcus lactis subsp. cremoris (strain SK11).